Here is a 333-residue protein sequence, read N- to C-terminus: Chlorophyllide reductase 35.5 kDa chain (333 aa).

Residues 1 to 22 form a disordered region; sequence MTDAPNLKGFDARLREEAAEEP. Residues 45–50 and Lys-74 each bind ATP; that span reads GSGKSF. Residue Ser-49 participates in Mg(2+) binding. Positions 130 and 165 each coordinate [4Fe-4S] cluster. 219–220 provides a ligand contact to ATP; it reads NK.

This sequence belongs to the NifH/BchL/ChlL family. Homodimer. Chlorophyllide reductase is composed of three subunits; BchX, BchY and BchZ. The cofactor is [4Fe-4S] cluster.

The enzyme catalyses 3-deacetyl-3-vinylbacteriochlorophyllide a + 2 oxidized [2Fe-2S]-[ferredoxin] + ADP + phosphate = chlorophyllide a + 2 reduced [2Fe-2S]-[ferredoxin] + ATP + H2O + H(+). It carries out the reaction bacteriochlorophyllide a + 2 oxidized [2Fe-2S]-[ferredoxin] + ADP + phosphate = 3-acetyl-3-devinylchlorophyllide a + 2 reduced [2Fe-2S]-[ferredoxin] + ATP + H2O + H(+). The catalysed reaction is 3-deacetyl-3-(1-hydroxyethyl)bacteriochlorophyllide a + 2 oxidized [2Fe-2S]-[ferredoxin] + ADP + phosphate = 3-devinyl-3-(1-hydroxyethyl)chlorophyllide a + 2 reduced [2Fe-2S]-[ferredoxin] + ATP + H2O + H(+). It functions in the pathway porphyrin-containing compound metabolism; bacteriochlorophyll biosynthesis. Its function is as follows. Converts chlorophylls (Chl) into bacteriochlorophylls (BChl) by reducing ring B of the tetrapyrrole. This is Chlorophyllide reductase 35.5 kDa chain (bchX) from Rhodobacter capsulatus (strain ATCC BAA-309 / NBRC 16581 / SB1003).